A 144-amino-acid polypeptide reads, in one-letter code: uncharacterized protein (144 aa).

The HIT domain maps to 4–111; that stretch reads VFCAIIAGEA…LPPRNGDKLS (108 aa). The Histidine triad motif motif lies at 96 to 100; the sequence is HVHLH.

This is an uncharacterized protein from Mycobacterium tuberculosis (strain CDC 1551 / Oshkosh).